We begin with the raw amino-acid sequence, 61 residues long: Large ribosomal subunit protein uL29 (61 aa).

Belongs to the universal ribosomal protein uL29 family.

The protein is Large ribosomal subunit protein uL29 of Xanthomonas euvesicatoria pv. vesicatoria (strain 85-10) (Xanthomonas campestris pv. vesicatoria).